Consider the following 105-residue polypeptide: Integration host factor subunit beta (105 aa).

The protein belongs to the bacterial histone-like protein family. Heterodimer of an alpha and a beta chain.

Its function is as follows. This protein is one of the two subunits of integration host factor, a specific DNA-binding protein that functions in genetic recombination as well as in transcriptional and translational control. This Bradyrhizobium sp. (strain ORS 278) protein is Integration host factor subunit beta.